Here is a 460-residue protein sequence, read N- to C-terminus: Histidinol dehydrogenase (460 aa).

Residues serine 269, glutamine 291, and histidine 294 each contribute to the substrate site. Positions 291 and 294 each coordinate Zn(2+). Active-site proton acceptor residues include glutamate 358 and histidine 359. Substrate is bound by residues histidine 359, aspartate 392, glutamate 446, and histidine 451. Aspartate 392 contacts Zn(2+). Zn(2+) is bound at residue histidine 451.

It belongs to the histidinol dehydrogenase family. Zn(2+) is required as a cofactor.

It carries out the reaction L-histidinol + 2 NAD(+) + H2O = L-histidine + 2 NADH + 3 H(+). It functions in the pathway amino-acid biosynthesis; L-histidine biosynthesis; L-histidine from 5-phospho-alpha-D-ribose 1-diphosphate: step 9/9. Catalyzes the sequential NAD-dependent oxidations of L-histidinol to L-histidinaldehyde and then to L-histidine. This Rhodopirellula baltica (strain DSM 10527 / NCIMB 13988 / SH1) protein is Histidinol dehydrogenase.